A 159-amino-acid chain; its full sequence is SsrA-binding protein (159 aa).

Residues 131–159 (KGKKLHDKRESEKERDWNRQKSRLLKDNG) form a disordered region. Basic and acidic residues predominate over residues 137–159 (DKRESEKERDWNRQKSRLLKDNG).

It belongs to the SmpB family.

It is found in the cytoplasm. Functionally, required for rescue of stalled ribosomes mediated by trans-translation. Binds to transfer-messenger RNA (tmRNA), required for stable association of tmRNA with ribosomes. tmRNA and SmpB together mimic tRNA shape, replacing the anticodon stem-loop with SmpB. tmRNA is encoded by the ssrA gene; the 2 termini fold to resemble tRNA(Ala) and it encodes a 'tag peptide', a short internal open reading frame. During trans-translation Ala-aminoacylated tmRNA acts like a tRNA, entering the A-site of stalled ribosomes, displacing the stalled mRNA. The ribosome then switches to translate the ORF on the tmRNA; the nascent peptide is terminated with the 'tag peptide' encoded by the tmRNA and targeted for degradation. The ribosome is freed to recommence translation, which seems to be the essential function of trans-translation. In Rhizobium etli (strain CIAT 652), this protein is SsrA-binding protein.